We begin with the raw amino-acid sequence, 403 residues long: Poly(rC)-binding protein 4 (403 aa).

KH domains lie at 17-67 (TLTL…TITG), 101-154 (PVTL…TVSG), and 241-293 (TSSQ…TITG).

It localises to the cytoplasm. In terms of biological role, single-stranded nucleic acid binding protein that binds preferentially to oligo dC. This is Poly(rC)-binding protein 4 (PCBP4) from Homo sapiens (Human).